The following is a 147-amino-acid chain: Large ribosomal subunit protein uL16 (147 aa).

Positions 1–20 (MLMPKKVKHRKVQRGRMKGK) are disordered.

Belongs to the universal ribosomal protein uL16 family. As to quaternary structure, part of the 50S ribosomal subunit.

Functionally, binds 23S rRNA and is also seen to make contacts with the A and possibly P site tRNAs. The polypeptide is Large ribosomal subunit protein uL16 (Clostridium kluyveri (strain ATCC 8527 / DSM 555 / NBRC 12016 / NCIMB 10680 / K1)).